Here is a 381-residue protein sequence, read N- to C-terminus: Phenylalanine dehydrogenase (381 aa).

Arg55 contributes to the NAD(+) binding site. Lys79 contacts L-phenylalanine. Lys91 is a catalytic residue. Residues Asp126, Ser157, Thr161, 191–197 (GLGKVGY), 214–215 (DI), 254–255 (AM), and 275–277 (SAN) each bind NAD(+). Residue Asn277 participates in L-phenylalanine binding.

It belongs to the Glu/Leu/Phe/Val dehydrogenases family.

It catalyses the reaction L-phenylalanine + NAD(+) + H2O = 3-phenylpyruvate + NH4(+) + NADH + H(+). It functions in the pathway amino-acid biosynthesis; L-phenylalanine biosynthesis; L-phenylalanine from phenylpyruvate (PDH route): step 1/1. Its function is as follows. Catalyzes the reversible NAD(+)-dependent oxidative deamination of L-phenylalanine to phenylpyruvate. This Lysinibacillus sphaericus (Bacillus sphaericus) protein is Phenylalanine dehydrogenase.